Reading from the N-terminus, the 130-residue chain is Small ribosomal subunit protein uS8 (130 aa).

This sequence belongs to the universal ribosomal protein uS8 family. As to quaternary structure, part of the 30S ribosomal subunit. Contacts proteins S5 and S12.

Functionally, one of the primary rRNA binding proteins, it binds directly to 16S rRNA central domain where it helps coordinate assembly of the platform of the 30S subunit. The protein is Small ribosomal subunit protein uS8 of Actinobacillus pleuropneumoniae serotype 5b (strain L20).